Consider the following 151-residue polypeptide: MGTDDLGKGEKILNGFQINWMILRDADTGKIIWQENKDFSCPDVEHEAKVPVKILSLRAVSREINFSTVEAMENFRLDQKVLFKGRIMEEWFFEMGWVSPNTTNTWQSTIEAAPESQMMPAKVLNGNVTIETSFYDGDTLISKSVVRLYYI.

The protein belongs to the PDE6D/unc-119 family. As to quaternary structure, interacts with Pde6.

The protein localises to the nucleus. It is found in the cytoplasm. This Anopheles gambiae (African malaria mosquito) protein is Probable cGMP 3',5'-cyclic phosphodiesterase subunit delta.